A 199-amino-acid chain; its full sequence is MEILLATTNLHKIREFKEMCKAFAHLEILSLHQFPAYMCPEEVGTNFKENAISKAEHAAKHLNRWVLADDSGLVVPRLSGKPGIYSRRFAGLEATDEENRKKLLLEMRQLINKEDRTAYYECCLALSSPTGLQKCVQGICEGFILNEARGRNGFGYDSLFVKNDYEKSFAEIDEAVKNRISHRRKAFERLSAFLENLRD.

7–12 contacts substrate; it reads TTNLHK. Mg(2+)-binding residues include glutamate 41 and aspartate 70. Aspartate 70 serves as the catalytic Proton acceptor. Residues serine 71, 154–157, lysine 177, and 182–183 each bind substrate; these read FGYD and HR.

Belongs to the HAM1 NTPase family. As to quaternary structure, homodimer. Requires Mg(2+) as cofactor.

It carries out the reaction XTP + H2O = XMP + diphosphate + H(+). It catalyses the reaction dITP + H2O = dIMP + diphosphate + H(+). The catalysed reaction is ITP + H2O = IMP + diphosphate + H(+). Pyrophosphatase that catalyzes the hydrolysis of nucleoside triphosphates to their monophosphate derivatives, with a high preference for the non-canonical purine nucleotides XTP (xanthosine triphosphate), dITP (deoxyinosine triphosphate) and ITP. Seems to function as a house-cleaning enzyme that removes non-canonical purine nucleotides from the nucleotide pool, thus preventing their incorporation into DNA/RNA and avoiding chromosomal lesions. This Protochlamydia amoebophila (strain UWE25) protein is dITP/XTP pyrophosphatase.